Here is a 193-residue protein sequence, read N- to C-terminus: dTTP/UTP pyrophosphatase (193 aa).

Residue Asp-77 is the Proton acceptor of the active site.

Belongs to the Maf family. YhdE subfamily. It depends on a divalent metal cation as a cofactor.

It is found in the cytoplasm. It catalyses the reaction dTTP + H2O = dTMP + diphosphate + H(+). It carries out the reaction UTP + H2O = UMP + diphosphate + H(+). Its function is as follows. Nucleoside triphosphate pyrophosphatase that hydrolyzes dTTP and UTP. May have a dual role in cell division arrest and in preventing the incorporation of modified nucleotides into cellular nucleic acids. In Bacteroides thetaiotaomicron (strain ATCC 29148 / DSM 2079 / JCM 5827 / CCUG 10774 / NCTC 10582 / VPI-5482 / E50), this protein is dTTP/UTP pyrophosphatase.